The following is a 748-amino-acid chain: Polyribonucleotide nucleotidyltransferase (748 aa).

Residues D487 and D493 each contribute to the Mg(2+) site. A KH domain is found at 554–613 (PSTTTIKIDKDKIRDIIGPGGKVIKEICETSGAKIDISDDGTVSVYASDRDKLKVALDKI). The S1 motif domain occupies 623-691 (GEIFNGTVVK…NKGKAKLTIK (69 aa)). The segment at 695-733 (KDKFSNNTKPKTSVNNTKDNSEPEQRHDSSKKRAWNEDN) is disordered. Residues 699–712 (SNNTKPKTSVNNTK) are compositionally biased toward polar residues. A compositionally biased stretch (basic and acidic residues) spans 713 to 722 (DNSEPEQRHD).

The protein belongs to the polyribonucleotide nucleotidyltransferase family. The cofactor is Mg(2+).

The protein localises to the cytoplasm. The catalysed reaction is RNA(n+1) + phosphate = RNA(n) + a ribonucleoside 5'-diphosphate. Involved in mRNA degradation. Catalyzes the phosphorolysis of single-stranded polyribonucleotides processively in the 3'- to 5'-direction. This Rickettsia rickettsii (strain Iowa) protein is Polyribonucleotide nucleotidyltransferase.